Consider the following 327-residue polypeptide: Tryptophan--tRNA ligase (327 aa).

ATP-binding positions include Gln9–Ser11 and Gly17–Asn18. Positions Pro10–Asn18 match the 'HIGH' region motif. Asp132 is a binding site for L-tryptophan. Residues Gly144–Asp146, Ile183, and Lys192–Ser196 contribute to the ATP site. The 'KMSKS' region motif lies at Lys192–Ser196.

This sequence belongs to the class-I aminoacyl-tRNA synthetase family. Homodimer.

It is found in the cytoplasm. The enzyme catalyses tRNA(Trp) + L-tryptophan + ATP = L-tryptophyl-tRNA(Trp) + AMP + diphosphate + H(+). In terms of biological role, catalyzes the attachment of tryptophan to tRNA(Trp). This is Tryptophan--tRNA ligase from Caldanaerobacter subterraneus subsp. tengcongensis (strain DSM 15242 / JCM 11007 / NBRC 100824 / MB4) (Thermoanaerobacter tengcongensis).